Here is a 123-residue protein sequence, read N- to C-terminus: Small ribosomal subunit protein uS12 (123 aa).

D89 is subject to 3-methylthioaspartic acid.

Belongs to the universal ribosomal protein uS12 family. Part of the 30S ribosomal subunit. Contacts proteins S8 and S17. May interact with IF1 in the 30S initiation complex.

Functionally, with S4 and S5 plays an important role in translational accuracy. Interacts with and stabilizes bases of the 16S rRNA that are involved in tRNA selection in the A site and with the mRNA backbone. Located at the interface of the 30S and 50S subunits, it traverses the body of the 30S subunit contacting proteins on the other side and probably holding the rRNA structure together. The combined cluster of proteins S8, S12 and S17 appears to hold together the shoulder and platform of the 30S subunit. The sequence is that of Small ribosomal subunit protein uS12 from Beijerinckia indica subsp. indica (strain ATCC 9039 / DSM 1715 / NCIMB 8712).